The chain runs to 448 residues: Solute carrier family 52, riboflavin transporter, member 3-A (448 aa).

Transmembrane regions (helical) follow at residues alanine 11 to valine 31, leucine 40 to leucine 60, and leucine 73 to tryptophan 93. N-linked (GlcNAc...) asparagine glycosylation occurs at asparagine 94. A run of 2 helical transmembrane segments spans residues alanine 107 to leucine 127 and isoleucine 138 to alanine 158. 4 N-linked (GlcNAc...) asparagine glycosylation sites follow: asparagine 168, asparagine 171, asparagine 175, and asparagine 194. 6 helical membrane-spanning segments follow: residues glutamate 198–leucine 218, alanine 280–valine 300, leucine 315–proline 335, leucine 339–methionine 359, alanine 376–valine 396, and alanine 407–phenylalanine 427.

This sequence belongs to the riboflavin transporter family.

It localises to the cell membrane. It catalyses the reaction riboflavin(in) = riboflavin(out). In terms of biological role, plasma membrane transporter mediating the uptake by cells of the water soluble vitamin B2/riboflavin that plays a key role in biochemical oxidation-reduction reactions of the carbohydrate, lipid, and amino acid metabolism. The polypeptide is Solute carrier family 52, riboflavin transporter, member 3-A (slc52a3a) (Danio rerio (Zebrafish)).